A 278-amino-acid chain; its full sequence is Complement component 1 Q subcomponent-binding protein, mitochondrial (278 aa).

The transit peptide at 1–70 (MLPLLRCVPR…PVPCACGCGA (70 aa)) directs the protein to the mitochondrion. A C1q binding region spans residues 73–90 (TEGDKAFVEFLTDEIKEE). An N6-acetyllysine mark is found at Lys88 and Lys91. The disordered stretch occupies residues 133 to 162 (NNSIPPTFDGEEEPSQGQKAEEQEPERTST). The interval 165 to 209 (FVVEVTKTDGKKTLVLDCHYPEDEIGHEDEAESDIFSIKEVSFQA) is interaction with MAVS. Tyr184 carries the post-translational modification Phosphotyrosine. Phosphoserine is present on residues Ser197 and Ser201. A Phosphothreonine modification is found at Thr210.

This sequence belongs to the MAM33 family. In terms of assembly, homotrimer; three monomers form a donut-shaped structure with an unusually asymmetric charge distribution on the surface. Interacts with CDK13, HRK, VTN, NFYB, ADRA1B, FOXC1, DDX21, DDX50, NCL, SRSF1 and SRSF9. Interacts with CD93; the association may represent a cell surface C1q receptor. Interacts with KRT1; the association represents a cell surface kininogen receptor. Interacts with CD209; the interaction is indicative for a C1q:C1QBP:CD209 signaling complex. Interacts with FBL and RRP1; the respective interactions with C1QBP are competitive. Probably associates with the mitoribosome. Interacts with MAVS; the interaction occurs upon viral transfection. Interacts with PPIF. Interacts with U2AF1L4. Interacts with PLEKHN1. Interacts with VGF-derived peptide TLQP-21. Interacts with MRE11 and RAD50; forming the MRC (MRE11-RAD50-C1QBP) complex that inhibits the activity of MRE11. Ubiquitous.

It localises to the mitochondrion matrix. The protein resides in the nucleus. The protein localises to the cell membrane. Its subcellular location is the secreted. It is found in the cytoplasm. It localises to the nucleolus. Its function is as follows. Is believed to be a multifunctional and multicompartmental protein involved in inflammation and infection processes, ribosome biogenesis, protein synthesis in mitochondria, regulation of apoptosis, transcriptional regulation and pre-mRNA splicing. At the cell surface is thought to act as an endothelial receptor for plasma proteins of the complement and kallikrein-kinin cascades. Putative receptor for C1q; specifically binds to the globular 'heads' of C1q thus inhibiting C1; may perform the receptor function through a complex with C1qR/CD93. In complex with cytokeratin-1/KRT1 is a high affinity receptor for kininogen-1/HMWK. Can also bind other plasma proteins, such as coagulation factor XII leading to its autoactivation. May function to bind initially fluid kininogen-1 to the cell membrane. The secreted form may enhance both extrinsic and intrinsic coagulation pathways. It is postulated that the cell surface form requires docking with transmembrane proteins for downstream signaling which might be specific for a cell-type or response. By acting as C1q receptor is involved in chemotaxis of immature dendritic cells and neutrophils and is proposed to signal through CD209/DC-SIGN on immature dendritic cells, through integrin alpha-4/beta-1 during trophoblast invasion of the decidua, and through integrin beta-1 during endothelial cell adhesion and spreading. Signaling involved in inhibition of innate immune response is implicating the PI3K-AKT/PKB pathway. Required for protein synthesis in mitochondria. In mitochondrial translation may be involved in formation of functional 55S mitoribosomes; the function seems to involve its RNA-binding activity. Acts as a RNA modification reader, which specifically recognizes and binds mitochondrial RNAs modified by C5-methylcytosine (m5C) in response to stress, and promotes recruitment of the mitochondrial degradosome complex, leading to their degradation. May be involved in the nucleolar ribosome maturation process; the function may involve the exchange of FBL for RRP1 in the association with pre-ribosome particles. Involved in regulation of RNA splicing by inhibiting the RNA-binding capacity of SRSF1 and its phosphorylation. Is required for the nuclear translocation of splicing factor U2AF1L4. Involved in regulation of CDKN2A- and HRK-mediated apoptosis. May be involved in regulation of FOXC1 transcriptional activity and NFY/CCAAT-binding factor complex-mediated transcription. May play a role in antibacterial defense. Acts as a regulator of DNA repair via homologous recombination by inhibiting the activity of MRE11: interacts with unphosphorylated MRE11 and RAD50 in absence of DNA damage, preventing formation and activity of the MRN complex. Following DNA damage, dissociates from phosphorylated MRE11, allowing formation of the MRN complex. This chain is Complement component 1 Q subcomponent-binding protein, mitochondrial (C1qbp), found in Mus musculus (Mouse).